A 136-amino-acid polypeptide reads, in one-letter code: Protein LpdD (136 aa).

This sequence belongs to the CinA family.

In terms of biological role, probably involved in tannin degradation, however the precise biochemical function in metabolism of gallate is unknown. This is Protein LpdD from Lactiplantibacillus plantarum (strain ATCC BAA-793 / NCIMB 8826 / WCFS1) (Lactobacillus plantarum).